We begin with the raw amino-acid sequence, 271 residues long: MPELPEVETALRGISPYLKNFTIEKVVVRQPKLRWAVSEELITLKNVKIVDLTRRAKYLIIHTEKGYIIGHLGMSGSVRIVPQDSAIDKHDHIDIVVNNGKLLRYNDPRRFGAWLWTENLDDFHLFLKLGPEPLSDEFNAEYLFKKSRQKSTALKTFLMDNAVVVGVGNIYTNESLFICGIHPLKLAKNLTRNQCFSLVNTIKDVLRKAIIQGGTTLKDFLQPDGRPGYFAQELLVYGNKDKPCPKCGGKIESLIIGQRNSFFCPKCQKRG.

Proline 2 (schiff-base intermediate with DNA) is an active-site residue. The Proton donor role is filled by glutamate 3. Lysine 57 acts as the Proton donor; for beta-elimination activity in catalysis. 3 residues coordinate DNA: histidine 90, arginine 109, and lysine 150. An FPG-type zinc finger spans residues 235–269; the sequence is LVYGNKDKPCPKCGGKIESLIIGQRNSFFCPKCQK. The active-site Proton donor; for delta-elimination activity is the arginine 259.

The protein belongs to the FPG family. In terms of assembly, monomer. Zn(2+) is required as a cofactor.

It carries out the reaction Hydrolysis of DNA containing ring-opened 7-methylguanine residues, releasing 2,6-diamino-4-hydroxy-5-(N-methyl)formamidopyrimidine.. The enzyme catalyses 2'-deoxyribonucleotide-(2'-deoxyribose 5'-phosphate)-2'-deoxyribonucleotide-DNA = a 3'-end 2'-deoxyribonucleotide-(2,3-dehydro-2,3-deoxyribose 5'-phosphate)-DNA + a 5'-end 5'-phospho-2'-deoxyribonucleoside-DNA + H(+). Functionally, involved in base excision repair of DNA damaged by oxidation or by mutagenic agents. Acts as a DNA glycosylase that recognizes and removes damaged bases. Has a preference for oxidized purines, such as 7,8-dihydro-8-oxoguanine (8-oxoG). Has AP (apurinic/apyrimidinic) lyase activity and introduces nicks in the DNA strand. Cleaves the DNA backbone by beta-delta elimination to generate a single-strand break at the site of the removed base with both 3'- and 5'-phosphates. The protein is Formamidopyrimidine-DNA glycosylase (mutM) of Haemophilus influenzae (strain ATCC 51907 / DSM 11121 / KW20 / Rd).